The sequence spans 506 residues: Acyl-CoA-binding domain-containing protein 5 (506 aa).

An ACB domain is found at 44-133; sequence YETRFEAAVK…MKKIIETMPM (90 aa). An acyl-CoA contacts are provided by residues 55-64, 75-79, K101, and Y120; these read IQSLPKNGSF and YSFYK. Residues 175-217 form a disordered region; it reads AKAVNGKAESSDSGAESEEEEAQEELKGAEQSGSDDKKMMTKS. A coiled-coil region spans residues 181 to 209; the sequence is KAESSDSGAESEEEEAQEELKGAEQSGSD. A phosphoserine mark is found at S184, S185, S187, S191, S206, and S233. Over residues 198–217 the composition is skewed to basic and acidic residues; sequence EELKGAEQSGSDDKKMMTKS. 2 disordered regions span residues 234–302 and 345–417; these read FAQD…CDSM and AVKG…RGSR. A compositionally biased stretch (basic and acidic residues) spans 238–257; the sequence is SDIHTDSSRSARRSEDKKPT. A compositionally biased stretch (polar residues) spans 258 to 267; that stretch reads DQSSQQTGNT. The residue at position 301 (S301) is a Phosphoserine. Over residues 348–360 the composition is skewed to basic and acidic residues; the sequence is GKGEVKHGGEDGR. Residue S403 is modified to Phosphoserine. Residues 406–416 show a composition bias toward basic and acidic residues; sequence DGERWGSDRGS. Positions 426-451 form a coiled coil; that stretch reads LVLIRLQEDMQNVLQRLHKLETLTAS. The residue at position 444 (K444) is an N6-acetyllysine. Residues 478–498 traverse the membrane as a helical segment; the sequence is GALAFAIIWPFIAQWLVHLYY.

It belongs to the ATG37 family.

It is found in the peroxisome membrane. Its function is as follows. Acyl-CoA binding protein which acts as the peroxisome receptor for pexophagy but is dispensable for aggrephagy and nonselective autophagy. Binds medium- and long-chain acyl-CoA esters. The protein is Acyl-CoA-binding domain-containing protein 5 (Acbd5) of Rattus norvegicus (Rat).